Reading from the N-terminus, the 396-residue chain is NDP-glycosyltransferase YjiC (396 aa).

Residues Asn-18, Thr-234, Val-283, His-298, and 302 to 306 (NSTME) each bind UDP.

This sequence belongs to the UDP-glycosyltransferase family.

The catalysed reaction is an NDP-glycose + an acceptor = a glycosylated acceptor + NDP.. Glycosyltransferase that can glycosylate a wide range of substrates, including various flavonoids (flavones, flavonols, flavanones, flavanols, chalcones), isoflavonoids and stilbenes, to produce multiple glycosylated products. It can accept diverse nucleotide diphosphate-D/L-sugars as donors, including ADP-, GDP-, CDP-, TDP- or UDP-alpha-D-glucose, and catalyzes O-, N-, or S-glycosylation. In vitro, catalyzes the glycosylation of, among others, apigenin, 3-hydroxyflavone, phloretin or resveratrol, resulting in multiple glucosylated products, along with mono-, di-, tri- and tetraglucosides. Can also catalyze the glycosylation of the macrolide epothilone A with diverse NDP-D/L-sugars, forming different epothilone A glycoside derivatives. The polypeptide is NDP-glycosyltransferase YjiC (Bacillus licheniformis (strain ATCC 14580 / DSM 13 / JCM 2505 / CCUG 7422 / NBRC 12200 / NCIMB 9375 / NCTC 10341 / NRRL NRS-1264 / Gibson 46)).